We begin with the raw amino-acid sequence, 112 residues long: Signal peptidase complex-like protein DTM1 (112 aa).

Residues 1-25 (MGRDEMLRRSLVALAAAVVVTGVVT) form the signal peptide. A run of 2 helical transmembrane segments spans residues 33 to 53 (ATYG…WEFF) and 92 to 112 (MAML…YVSS).

It belongs to the SPCS1 family.

It localises to the endoplasmic reticulum membrane. Functions in tapetum development during early meiosis. May play a role in the endoplasmic reticulum (ER) membrane in the early stages of tapetum development in anthers. Seems to function after MSP1 and before UDT1. This is Signal peptidase complex-like protein DTM1 from Oryza sativa subsp. japonica (Rice).